The chain runs to 121 residues: Large ribosomal subunit protein uL14 (121 aa).

This sequence belongs to the universal ribosomal protein uL14 family. Part of the 50S ribosomal subunit. Forms a cluster with proteins L3 and L19. In the 70S ribosome, L14 and L19 interact and together make contacts with the 16S rRNA in bridges B5 and B8.

Its function is as follows. Binds to 23S rRNA. Forms part of two intersubunit bridges in the 70S ribosome. This is Large ribosomal subunit protein uL14 from Prochlorococcus marinus (strain MIT 9515).